Consider the following 316-residue polypeptide: Olfactory receptor 4N4C (316 aa).

At 1 to 26 the chain is on the cytoplasmic side; the sequence is MKIANNTVVTEFILLGLTQSQDIQLL. A helical membrane pass occupies residues 27 to 47; sequence VFVLILIFYLIILPGNFLIIF. Over 48-56 the chain is Extracellular; sequence TIRSDPGLT. Residues 57-77 traverse the membrane as a helical segment; it reads APLYLFLGNLAFLDASYSFIV. The Cytoplasmic portion of the chain corresponds to 78 to 99; the sequence is APRMLVDFLSEKKVISYRGCIT. A disulfide bridge connects residues cysteine 97 and cysteine 179. Residues 100-120 traverse the membrane as a helical segment; that stretch reads QLFFLHFLGGGEGLLLVVMAF. Topologically, residues 121 to 143 are extracellular; that stretch reads DRYIAICRPLHCSTVMNPRACYA. The chain crosses the membrane as a helical span at residues 144–164; that stretch reads MMLALWLGGFVHSIIQVVLIL. Over 165 to 204 the chain is Cytoplasmic; that stretch reads RLPFCGPNQLDNFFCDVRQVIKLACTDMFVVELLMVFNSG. Residues 205–225 form a helical membrane-spanning segment; the sequence is LMTLLCFLGLLASYAVILCHV. Residues 226–243 lie on the Extracellular side of the membrane; the sequence is RRAASEGKNKAMSTCTTR. The helical transmembrane segment at 244–264 threads the bilayer; that stretch reads VIIILLMFGPAIFIYICPFRA. The Cytoplasmic portion of the chain corresponds to 265 to 268; it reads LPAD. Residues 269-289 form a helical membrane-spanning segment; the sequence is KMVSLFHTVIFPLMNPMIYTL. The Extracellular portion of the chain corresponds to 290-316; sequence RNQEVKTSMKRLLSRHVVCQVDFIIRN.

It belongs to the G-protein coupled receptor 1 family.

It localises to the membrane. Functionally, odorant receptor. The polypeptide is Olfactory receptor 4N4C (Homo sapiens (Human)).